The following is a 184-amino-acid chain: Lipocalin-15 (184 aa).

Residues 1–20 (MMSFLLGAILTLLWAPTAQA) form the signal peptide. C83 and C176 are disulfide-bonded.

This sequence belongs to the calycin superfamily. Lipocalin family.

The protein localises to the secreted. This Homo sapiens (Human) protein is Lipocalin-15 (LCN15).